A 115-amino-acid chain; its full sequence is UPF0102 protein SYO3AOP1_0546 (115 aa).

It belongs to the UPF0102 family.

The chain is UPF0102 protein SYO3AOP1_0546 from Sulfurihydrogenibium sp. (strain YO3AOP1).